The sequence spans 304 residues: HPr kinase/phosphorylase (304 aa).

Residues His136 and Lys157 contribute to the active site. 151 to 158 (GESGIGKS) contacts ATP. Ser158 is a binding site for Mg(2+). Catalysis depends on Asp175, which acts as the Proton acceptor; for phosphorylation activity. Proton donor; for dephosphorylation activity. The segment at 198–207 (LEVRGIGIID) is important for the catalytic mechanism of both phosphorylation and dephosphorylation. Glu199 is a binding site for Mg(2+). The active site involves Arg240. The segment at 261 to 266 (PVRPGR) is important for the catalytic mechanism of dephosphorylation.

It belongs to the HPrK/P family. As to quaternary structure, homohexamer. Mg(2+) serves as cofactor.

The catalysed reaction is [HPr protein]-L-serine + ATP = [HPr protein]-O-phospho-L-serine + ADP + H(+). It catalyses the reaction [HPr protein]-O-phospho-L-serine + phosphate + H(+) = [HPr protein]-L-serine + diphosphate. Functionally, catalyzes the ATP- as well as the pyrophosphate-dependent phosphorylation of a specific serine residue in HPr, a phosphocarrier protein of the phosphoenolpyruvate-dependent sugar phosphotransferase system (PTS). HprK/P also catalyzes the pyrophosphate-producing, inorganic phosphate-dependent dephosphorylation (phosphorolysis) of seryl-phosphorylated HPr (P-Ser-HPr). The two antagonistic activities of HprK/P are regulated by several intracellular metabolites, which change their concentration in response to the absence or presence of rapidly metabolisable carbon sources (glucose, fructose, etc.) in the growth medium. Therefore, by controlling the phosphorylation state of HPr, HPrK/P is a sensor enzyme that plays a major role in the regulation of carbon metabolism and sugar transport: it mediates carbon catabolite repression (CCR), and regulates PTS-catalyzed carbohydrate uptake and inducer exclusion. This Clostridium botulinum (strain Eklund 17B / Type B) protein is HPr kinase/phosphorylase.